The primary structure comprises 1030 residues: uncharacterized protein (1030 aa).

The SWIM-type zinc finger occupies 51 to 86 (IKVSFTAKDGELTCKCSCLANVDNCVHIVAVLLKYH). A Helicase ATP-binding domain is found at 590 to 751 (RGLEENKFGG…WSCFDFVLPS (162 aa)). 603–610 (DEMGLGKT) contacts ATP. Positions 702 to 705 (DEAQ) match the DEAQ box motif. The 155-residue stretch at 867 to 1021 (ALEIIHEAIE…EDVNFFESLT (155 aa)) folds into the Helicase C-terminal domain.

It belongs to the SNF2/RAD54 helicase family.

This is an uncharacterized protein from Mycoplasma pneumoniae (strain ATCC 29342 / M129 / Subtype 1) (Mycoplasmoides pneumoniae).